Reading from the N-terminus, the 1183-residue chain is Polyphosphatidylinositol phosphatase INP52 (1183 aa).

Positions 133 to 153 (PPSISTHSSRSSLRSSSSRSL) are enriched in low complexity. Residues 133–161 (PPSISTHSSRSSLRSSSSRSLNAQEQAPK) form a disordered region. Phosphoserine is present on Ser-152. Residues 167–507 (LRKLLSNGSF…GDQISQIYTG (341 aa)) enclose the SAC domain. Ser-522 carries the phosphoserine modification. Residues 955–968 (SPLLSGPSPQPSVV) show a composition bias toward low complexity. The tract at residues 955-1183 (SPLLSGPSPQ…VHPLKPCDPN (229 aa)) is disordered. Phosphoserine is present on residues Ser-1005 and Ser-1016. At Thr-1032 the chain carries Phosphothreonine. 3 stretches are compositionally biased toward polar residues: residues 1046–1057 (KPVSLQKSSSEL), 1082–1100 (STAP…VSTT), and 1130–1145 (KLNT…SPSN). Phosphoserine is present on Ser-1095.

This sequence belongs to the synaptojanin family. In the central section; belongs to the inositol 1,4,5-trisphosphate 5-phosphatase family. In terms of assembly, interacts (via SAC domain) with BSP1; the interaction is direct. Interacts with ABP1.

It is found in the cytoplasm. The protein resides in the cytoskeleton. Its subcellular location is the actin patch. It catalyses the reaction a 1,2-diacyl-sn-glycero-3-phospho-(1D-myo-inositol-4,5-bisphosphate) + H2O = a 1,2-diacyl-sn-glycero-3-phospho-(1D-myo-inositol 4-phosphate) + phosphate. Its function is as follows. Dephosphorylates a number of phosphatidylinositols (PIs) like phosphatidylinositol 4,5-bisphosphate (PtdIns(4,5)P2), but also phosphatidylinositol 3-phosphate (PtdIns(3)P), phosphatidylinositol 4-phosphate (PtdIns(4)P), and phosphatidylinositol 3,5-bisphosphate (PtdIns(3,5)P2). Controls the cellular levels and subcellular distribution of phosphatidylinositol 3-phosphate and phosphatidylinositol 4,5-bisphosphate. Specifically functions within the early endocytic pathway and actin organization. The protein is Polyphosphatidylinositol phosphatase INP52 of Saccharomyces cerevisiae (strain ATCC 204508 / S288c) (Baker's yeast).